The following is a 372-amino-acid chain: Glutamate 5-kinase (372 aa).

Lysine 14 is a binding site for ATP. The substrate site is built by serine 54, aspartate 141, and asparagine 153. ATP contacts are provided by residues 173–174 (TD) and 215–221 (TGGMATK). The 79-residue stretch at 280–358 (RGQVVLDTGA…DNIEEILGYD (79 aa)) folds into the PUA domain.

This sequence belongs to the glutamate 5-kinase family.

Its subcellular location is the cytoplasm. It catalyses the reaction L-glutamate + ATP = L-glutamyl 5-phosphate + ADP. The protein operates within amino-acid biosynthesis; L-proline biosynthesis; L-glutamate 5-semialdehyde from L-glutamate: step 1/2. Catalyzes the transfer of a phosphate group to glutamate to form L-glutamate 5-phosphate. The sequence is that of Glutamate 5-kinase from Shewanella halifaxensis (strain HAW-EB4).